Reading from the N-terminus, the 61-residue chain is MPNILSLTCICFNSVLYPTSFFFAKLPEAYAIFNPIVDIMPVIPLFFFLLAFVWQAAVSFR.

Positions methionine 1–alanine 24 are excised as a propeptide. The helical transmembrane segment at isoleucine 32–phenylalanine 52 threads the bilayer.

This sequence belongs to the PsbK family. In terms of assembly, PSII is composed of 1 copy each of membrane proteins PsbA, PsbB, PsbC, PsbD, PsbE, PsbF, PsbH, PsbI, PsbJ, PsbK, PsbL, PsbM, PsbT, PsbX, PsbY, PsbZ, Psb30/Ycf12, at least 3 peripheral proteins of the oxygen-evolving complex and a large number of cofactors. It forms dimeric complexes. Detected in both etioplasts and green leaves; PSII is only assembled in green leaves.

The protein localises to the plastid. It localises to the chloroplast thylakoid membrane. Functionally, one of the components of the core complex of photosystem II (PSII). PSII is a light-driven water:plastoquinone oxidoreductase that uses light energy to abstract electrons from H(2)O, generating O(2) and a proton gradient subsequently used for ATP formation. It consists of a core antenna complex that captures photons, and an electron transfer chain that converts photonic excitation into a charge separation. The sequence is that of Photosystem II reaction center protein K from Hordeum vulgare (Barley).